A 146-amino-acid chain; its full sequence is Hemoglobin subunit delta (146 aa).

One can recognise a Globin domain in the interval 2–146; that stretch reads HLTGDEKSAV…VATALAHKYH (145 aa). Ser50 bears the Phosphoserine mark. Residues His63 and His92 each coordinate heme b.

It belongs to the globin family. Heterotetramer of two delta chains and two alpha chains. Red blood cells.

The chain is Hemoglobin subunit delta (HBD) from Aotus trivirgatus (Three-striped night monkey).